Consider the following 185-residue polypeptide: Putative lipoprotein LprB (185 aa).

The first 24 residues, 1 to 24 (MRRKVRRLTLAVSALVALFPAVAG), serve as a signal peptide directing secretion. Cysteine 25 is lipidated: N-palmitoyl cysteine. Cysteine 25 is lipidated: S-diacylglycerol cysteine. A disordered region spans residues 26 to 50 (SDSGDNKPGATIPSTPANAEGRHGP).

It is found in the cell membrane. The chain is Putative lipoprotein LprB (lprB) from Mycobacterium bovis (strain ATCC BAA-935 / AF2122/97).